A 434-amino-acid chain; its full sequence is Asparagine--tRNA ligase (434 aa).

The protein belongs to the class-II aminoacyl-tRNA synthetase family. As to quaternary structure, homodimer.

The protein localises to the cytoplasm. The enzyme catalyses tRNA(Asn) + L-asparagine + ATP = L-asparaginyl-tRNA(Asn) + AMP + diphosphate + H(+). This is Asparagine--tRNA ligase from Oenococcus oeni (strain ATCC BAA-331 / PSU-1).